The sequence spans 665 residues: Adenylate cyclase 1 (665 aa).

A disordered region spans residues 1–25; the sequence is MLQRSESGFKDIESMQDSNADKPSR. Basic and acidic residues predominate over residues 7-24; that stretch reads SGFKDIESMQDSNADKPS. Helical transmembrane passes span 33-53 and 373-393; these read SLLGLVMVAMLIVVSATLVGL and AVSGAVVVVAVLLALVLAHLI. Residues 394-444 form the HAMP domain; that stretch reads TKSLNQLTDSANRLQDLDFATPIDVSSHVAEISTLNGAMNRARDAIFTFAL. Positions 471–603 constitute a Guanylate cyclase domain; the sequence is TAMFTDIYDF…DTVNVASRLE (133 aa). Residues Asp-476 and Asp-520 each coordinate Mg(2+).

It belongs to the adenylyl cyclase class-3 family. The cofactor is Mg(2+).

It localises to the cell membrane. It catalyses the reaction ATP = 3',5'-cyclic AMP + diphosphate. Functionally, plays essential roles in regulation of cellular metabolism by catalyzing the synthesis of a second messenger, cAMP. This chain is Adenylate cyclase 1 (cya1), found in Rhizobium meliloti (strain 1021) (Ensifer meliloti).